The primary structure comprises 329 residues: Glycerol-3-phosphate dehydrogenase [NAD(P)+] (329 aa).

3 residues coordinate NADPH: tryptophan 15, histidine 35, and lysine 107. Lysine 107, glycine 135, and serine 137 together coordinate sn-glycerol 3-phosphate. Alanine 139 serves as a coordination point for NADPH. The sn-glycerol 3-phosphate site is built by lysine 190, aspartate 243, serine 253, arginine 254, and asparagine 255. The active-site Proton acceptor is the lysine 190. Position 254 (arginine 254) interacts with NADPH. NADPH-binding residues include leucine 276 and glutamate 278.

Belongs to the NAD-dependent glycerol-3-phosphate dehydrogenase family.

The protein localises to the cytoplasm. It carries out the reaction sn-glycerol 3-phosphate + NAD(+) = dihydroxyacetone phosphate + NADH + H(+). The enzyme catalyses sn-glycerol 3-phosphate + NADP(+) = dihydroxyacetone phosphate + NADPH + H(+). The protein operates within membrane lipid metabolism; glycerophospholipid metabolism. Catalyzes the reduction of the glycolytic intermediate dihydroxyacetone phosphate (DHAP) to sn-glycerol 3-phosphate (G3P), the key precursor for phospholipid synthesis. This is Glycerol-3-phosphate dehydrogenase [NAD(P)+] from Rhodopseudomonas palustris (strain BisB5).